The sequence spans 132 residues: SLSHGKYYALGSGPARAMATKVKDGAVEPVEELYKELEYRDSHDKTVLVIENDAVPPVEIVEKVAAACGVSPADLTIIVTPTSSLAGGVQVVGRVLEVAMHKAHALHFPLENIVDGTGSAPVCPPHPNFVKA.

This sequence belongs to the MCH family.

It localises to the cytoplasm. The enzyme catalyses 5,10-methenyl-5,6,7,8-tetrahydromethanopterin + H2O = N(5)-formyl-5,6,7,8-tetrahydromethanopterin + H(+). It participates in one-carbon metabolism; formaldehyde degradation; formate from formaldehyde (H(4)MPT route): step 3/5. Its function is as follows. Catalyzes the hydrolysis of methenyl-H(4)MPT(+) to 5-formyl-H(4)MPT. The sequence is that of Methenyltetrahydromethanopterin cyclohydrolase (mch) from Methylomonas rubra.